A 66-amino-acid chain; its full sequence is Large ribosomal subunit protein bL33c (66 aa).

This sequence belongs to the bacterial ribosomal protein bL33 family.

Its subcellular location is the plastid. It is found in the chloroplast. The chain is Large ribosomal subunit protein bL33c from Morus indica (Mulberry).